Reading from the N-terminus, the 308-residue chain is Uricase-2 isozyme 1 (308 aa).

Active-site charge relay system residues include Lys17 and Thr63. Residues Thr63, Asp64, Phe165, Arg182, Val237, Gln238, and Asn264 each coordinate urate. His266 (charge relay system) is an active-site residue. Positions 306–308 match the Microbody targeting signal motif; that stretch reads SKL.

The protein belongs to the uricase family.

It is found in the peroxisome. It catalyses the reaction urate + O2 + H2O = 5-hydroxyisourate + H2O2. It functions in the pathway purine metabolism; urate degradation; (S)-allantoin from urate: step 1/3. Its function is as follows. Catalyzes the oxidation of uric acid to 5-hydroxyisourate, which is further processed to form (S)-allantoin. The chain is Uricase-2 isozyme 1 from Canavalia lineata (Beach bean).